The chain runs to 216 residues: Refilin-B (216 aa).

The tract at residues 1-52 (MVGRLSLQDVPELVDTKKKGDGVLDSPDSGLPPSPSPSHWGLAAATGGGGER) is disordered. Ser-6 and Ser-26 each carry phosphoserine.

Belongs to the Refilin family. As to quaternary structure, interacts with FLNA and FLNB.

The protein resides in the cytoplasm. It is found in the cytoskeleton. Functionally, involved in the regulation of the perinuclear actin network and nuclear shape through interaction with filamins. Plays an essential role in the formation of cartilaginous skeletal elements. This Rattus norvegicus (Rat) protein is Refilin-B.